Consider the following 225-residue polypeptide: RNA chaperone ProQ (225 aa).

Positions 107-169 (KARVQAQRAA…VAAKAPREER (63 aa)) are disordered. Low complexity predominate over residues 109–118 (RVQAQRAAQQ). Residues 137-146 (RERKPRPQQP) show a composition bias toward basic residues. The segment covering 147–156 (RRKEGAEQRK) has biased composition (basic and acidic residues).

It belongs to the ProQ family.

The protein resides in the cytoplasm. Its function is as follows. RNA chaperone with significant RNA binding, RNA strand exchange and RNA duplexing activities. May regulate ProP activity through an RNA-based, post-transcriptional mechanism. The chain is RNA chaperone ProQ from Klebsiella pneumoniae subsp. pneumoniae (strain ATCC 700721 / MGH 78578).